The chain runs to 541 residues: MAGSSSVQPQFIASTGNRSFSNAPLIENSDPEQIIVPDRKSWKNLFAYMGPGFLVSIAYIDPGNFETDLQSGAQYKYELLWIILVASCAALIIQSLAANLGVVTGKHLAEHCRNEYPRIPNFILWVLAEIAIVACDIPEVIGTAFALNMLFKIPVWIGVLLTGLSTLVLLALQQYGVRKLELFIAFLVCTIAGCFFAELGYAKPDAKEVLKGLFVPQLKGNGAAGLAISLLGAMVMPHNLFLHSALVLSRKIPRSMHGIKDACRFYMIESGFALVLAFLINVSIISVSGAVCNSPNINAQDQENCKDLDLNKASFLLENVLGSWSSKLFAIALLASGQSSTITGTYAGQYVMQGFLDLRLTPWLRNFLTRSLAIVPSLIVAIIGGSSGAGKLIIIASMILSFELPFALVPLLKFTSSKTKMGIYANSTTISSITWVIGFLIMAINIYYLASSFIKILLHGHLKLVAAIFLGIFGFLGMAVYLAGVAYLVLRRNKEATHLVALTSENPQIANESGNEGVYSLPREDIACMQLPQRRSNANDL.

Residue Asn-17 is glycosylated (N-linked (GlcNAc...) asparagine). 10 helical membrane-spanning segments follow: residues 45 to 65 (LFAY…PGNF), 78 to 98 (ELLW…SLAA), 122 to 142 (FILW…EVIG), 153 to 173 (IPVW…LALQ), 182 to 202 (LFIA…LGYA), 222 to 242 (GAAG…NLFL), 271 to 291 (GFAL…SGAV), 315 to 335 (FLLE…ALLA), 371 to 391 (SLAI…GAGK), and 392 to 412 (LIII…VPLL). Asn-426 is a glycosylation site (N-linked (GlcNAc...) asparagine). 2 helical membrane passes run 430-450 (ISSI…YYLA) and 465-485 (VAAI…LAGV). A glycan (N-linked (GlcNAc...) asparagine) is linked at Asn-511.

It belongs to the NRAMP (TC 2.A.55) family.

The protein resides in the membrane. In terms of biological role, probable divalent metal transporter. The polypeptide is Metal transporter Nramp1 (Populus trichocarpa (Western balsam poplar)).